Consider the following 130-residue polypeptide: Histone H2A type 3 (130 aa).

Residues 1–22 (MSGRGKQGGKARAKAKSRSSRA) form a disordered region. Residue S2 is modified to N-acetylserine. S2 bears the Phosphoserine; by RPS6KA5 mark. R4 bears the Citrulline; alternate mark. Symmetric dimethylarginine; by PRMT5; alternate is present on R4. K6 carries the N6-(2-hydroxyisobutyryl)lysine modification. Residues 7–19 (QGGKARAKAKSRS) show a composition bias toward basic residues. K10 bears the N6-(2-hydroxyisobutyryl)lysine; alternate mark. An N6-(beta-hydroxybutyryl)lysine; alternate mark is found at K10 and K14. K10 is modified (N6-lactoyllysine; alternate). At K10 the chain carries N6-succinyllysine; alternate. Residue K14 forms a Glycyl lysine isopeptide (Lys-Gly) (interchain with G-Cter in ubiquitin); alternate linkage. Residue K16 forms a Glycyl lysine isopeptide (Lys-Gly) (interchain with G-Cter in ubiquitin) linkage. N6-(2-hydroxyisobutyryl)lysine; alternate is present on K37. The residue at position 37 (K37) is an N6-(beta-hydroxybutyryl)lysine; alternate. K37 bears the N6-crotonyllysine; alternate mark. Residues K75 and K76 each carry the N6-(2-hydroxyisobutyryl)lysine modification. N6-(2-hydroxyisobutyryl)lysine; alternate is present on K96. At K96 the chain carries N6-(beta-hydroxybutyryl)lysine; alternate. The residue at position 96 (K96) is an N6-succinyllysine; alternate. Position 96 is an N6-glutaryllysine; alternate (K96). Q105 is modified (N5-methylglutamine). N6-(2-hydroxyisobutyryl)lysine; alternate is present on K119. N6-(beta-hydroxybutyryl)lysine; alternate is present on K119. An N6-crotonyllysine; alternate mark is found at K119 and K120. K119 and K120 each carry N6-glutaryllysine; alternate. K120 is covalently cross-linked (Glycyl lysine isopeptide (Lys-Gly) (interchain with G-Cter in ubiquitin); alternate). T121 is modified (phosphothreonine; by DCAF1). The residue at position 126 (K126) is an N6-crotonyllysine; alternate. K126 is subject to N6-glutaryllysine; alternate.

Belongs to the histone H2A family. In terms of assembly, the nucleosome is a histone octamer containing two molecules each of H2A, H2B, H3 and H4 assembled in one H3-H4 heterotetramer and two H2A-H2B heterodimers. The octamer wraps approximately 147 bp of DNA. Post-translationally, deiminated on Arg-4 in granulocytes upon calcium entry. Monoubiquitination of Lys-120 (H2AK119Ub) by RING1, TRIM37 and RNF2/RING2 complex gives a specific tag for epigenetic transcriptional repression and participates in X chromosome inactivation of female mammals. It is involved in the initiation of both imprinted and random X inactivation. Ubiquitinated H2A is enriched in inactive X chromosome chromatin. Ubiquitination of H2A functions downstream of methylation of 'Lys-27' of histone H3 (H3K27me). H2AK119Ub by RNF2/RING2 can also be induced by ultraviolet and may be involved in DNA repair. Monoubiquitination of Lys-120 (H2AK119Ub) by TRIM37 may promote transformation of cells in a number of breast cancers. Following DNA double-strand breaks (DSBs), it is ubiquitinated through 'Lys-63' linkage of ubiquitin moieties by the E2 ligase UBE2N and the E3 ligases RNF8 and RNF168, leading to the recruitment of repair proteins to sites of DNA damage. Ubiquitination at Lys-14 and Lys-16 (H2AK13Ub and H2AK15Ub, respectively) in response to DNA damage is initiated by RNF168 that mediates monoubiquitination at these 2 sites, and 'Lys-63'-linked ubiquitin are then conjugated to monoubiquitin; RNF8 is able to extend 'Lys-63'-linked ubiquitin chains in vitro. Deubiquitinated by USP51 at Lys-14 and Lys-16 (H2AK13Ub and H2AK15Ub, respectively) after damaged DNA is repaired. H2AK119Ub and ionizing radiation-induced 'Lys-63'-linked ubiquitination (H2AK13Ub and H2AK15Ub) are distinct events. In terms of processing, phosphorylation on Ser-2 (H2AS1ph) is enhanced during mitosis. Phosphorylation on Ser-2 by RPS6KA5/MSK1 directly represses transcription. Acetylation of H3 inhibits Ser-2 phosphorylation by RPS6KA5/MSK1. Phosphorylation at Thr-121 (H2AT120ph) by DCAF1 is present in the regulatory region of many tumor suppresor genes and down-regulates their transcription. Post-translationally, glutamine methylation at Gln-105 (H2AQ104me) by FBL is specifically dedicated to polymerase I. It is present at 35S ribosomal DNA locus and impairs binding of the FACT complex. Symmetric dimethylation on Arg-4 by the PRDM1/PRMT5 complex may play a crucial role in the germ-cell lineage. In terms of processing, crotonylation (Kcr) is specifically present in male germ cells and marks testis-specific genes in post-meiotic cells, including X-linked genes that escape sex chromosome inactivation in haploid cells. Crotonylation marks active promoters and enhancers and confers resistance to transcriptional repressors. It is also associated with post-meiotically activated genes on autosomes. Post-translationally, lactylated in macrophages by EP300/P300 by using lactoyl-CoA directly derived from endogenous or exogenous lactate, leading to stimulates gene transcription.

The protein resides in the nucleus. The protein localises to the chromosome. Its function is as follows. Core component of nucleosome. Nucleosomes wrap and compact DNA into chromatin, limiting DNA accessibility to the cellular machineries which require DNA as a template. Histones thereby play a central role in transcription regulation, DNA repair, DNA replication and chromosomal stability. DNA accessibility is regulated via a complex set of post-translational modifications of histones, also called histone code, and nucleosome remodeling. This Homo sapiens (Human) protein is Histone H2A type 3.